The following is a 155-amino-acid chain: Ribosomal RNA large subunit methyltransferase H (155 aa).

S-adenosyl-L-methionine contacts are provided by residues L72, G103, and 122 to 127 (LSPLTL).

This sequence belongs to the RNA methyltransferase RlmH family. As to quaternary structure, homodimer.

The protein resides in the cytoplasm. The enzyme catalyses pseudouridine(1915) in 23S rRNA + S-adenosyl-L-methionine = N(3)-methylpseudouridine(1915) in 23S rRNA + S-adenosyl-L-homocysteine + H(+). Its function is as follows. Specifically methylates the pseudouridine at position 1915 (m3Psi1915) in 23S rRNA. This is Ribosomal RNA large subunit methyltransferase H from Actinobacillus pleuropneumoniae serotype 3 (strain JL03).